The chain runs to 100 residues: Co-chaperonin GroES (100 aa).

Belongs to the GroES chaperonin family. Heptamer of 7 subunits arranged in a ring. Interacts with the chaperonin GroEL.

Its subcellular location is the cytoplasm. In terms of biological role, together with the chaperonin GroEL, plays an essential role in assisting protein folding. The GroEL-GroES system forms a nano-cage that allows encapsulation of the non-native substrate proteins and provides a physical environment optimized to promote and accelerate protein folding. GroES binds to the apical surface of the GroEL ring, thereby capping the opening of the GroEL channel. The polypeptide is Co-chaperonin GroES (Mycolicibacterium smegmatis (strain ATCC 700084 / mc(2)155) (Mycobacterium smegmatis)).